The primary structure comprises 326 residues: Glycerol-3-phosphate dehydrogenase [NAD(P)+] (326 aa).

Residues Ser10, Phe11, Arg31, and Lys108 each contribute to the NADPH site. Sn-glycerol 3-phosphate-binding residues include Lys108, Gly136, and Ser138. Ala140 serves as a coordination point for NADPH. Sn-glycerol 3-phosphate-binding residues include Lys191, Asp246, Ser256, Arg257, and Asn258. Lys191 acts as the Proton acceptor in catalysis. Arg257 contributes to the NADPH binding site. Residues Ile281 and Glu283 each coordinate NADPH.

This sequence belongs to the NAD-dependent glycerol-3-phosphate dehydrogenase family.

It is found in the cytoplasm. It carries out the reaction sn-glycerol 3-phosphate + NAD(+) = dihydroxyacetone phosphate + NADH + H(+). The catalysed reaction is sn-glycerol 3-phosphate + NADP(+) = dihydroxyacetone phosphate + NADPH + H(+). It functions in the pathway membrane lipid metabolism; glycerophospholipid metabolism. In terms of biological role, catalyzes the reduction of the glycolytic intermediate dihydroxyacetone phosphate (DHAP) to sn-glycerol 3-phosphate (G3P), the key precursor for phospholipid synthesis. The sequence is that of Glycerol-3-phosphate dehydrogenase [NAD(P)+] from Ehrlichia chaffeensis (strain ATCC CRL-10679 / Arkansas).